The following is a 392-amino-acid chain: Speckle-type POZ protein-like B (392 aa).

The region spanning 31–161 (KFSYMWTINN…DDKLTLFCEV (131 aa)) is the MATH domain. A BTB domain is found at 200–267 (TDCSLFVGGQ…IYTGKAPNLE (68 aa)).

It belongs to the Tdpoz family. As to quaternary structure, homodimer. Heterodimer with SPOP. Component of cullin-RING-based BCR (BTB-CUL3-RBX1) E3 ubiquitin-protein ligase complexes containing homodimeric SPOPL or the heterodimer formed by SPOP and SPOPL.

Its subcellular location is the nucleus. It functions in the pathway protein modification; protein ubiquitination. Its function is as follows. Component of a cullin-RING-based BCR (BTB-CUL3-RBX1) E3 ubiquitin-protein ligase complex that mediates the ubiquitination and subsequent proteasomal degradation of target proteins, but with relatively low efficiency. This chain is Speckle-type POZ protein-like B (spoplb), found in Danio rerio (Zebrafish).